We begin with the raw amino-acid sequence, 321 residues long: 4-hydroxy-2-oxoglutarate aldolase, mitochondrial (321 aa).

A mitochondrion-targeting transit peptide spans 1–23; it reads MLGPQIWASMRQGLSRGLSRNVK. 71-72 provides a ligand contact to substrate; sequence ST. K190 (schiff-base intermediate with substrate) is an active-site residue. Residues S192 and G216 each coordinate substrate.

The protein belongs to the DapA family. Homotetramer.

It localises to the mitochondrion. It carries out the reaction (4S)-4-hydroxy-2-oxoglutarate = glyoxylate + pyruvate. The enzyme catalyses (4R)-4-hydroxy-2-oxoglutarate = glyoxylate + pyruvate. Its activity is regulated as follows. Inhibited by divalent cations. Functionally, catalyzes the final step in the metabolic pathway of hydroxyproline. This is 4-hydroxy-2-oxoglutarate aldolase, mitochondrial (Hoga1) from Mus musculus (Mouse).